A 522-amino-acid chain; its full sequence is Anthranilate synthase component 1 (522 aa).

L-tryptophan is bound by residues S40 and 292–294 (PYM). Position 329–330 (329–330 (GT)) interacts with chorismate. E362 contacts Mg(2+). Chorismate contacts are provided by residues Y450, R470, 484 to 486 (GAG), and G486. E499 contributes to the Mg(2+) binding site.

Belongs to the anthranilate synthase component I family. In terms of assembly, heterotetramer consisting of two non-identical subunits: a beta subunit (TrpG) and a large alpha subunit (TrpE). Requires Mg(2+) as cofactor.

The enzyme catalyses chorismate + L-glutamine = anthranilate + pyruvate + L-glutamate + H(+). It participates in amino-acid biosynthesis; L-tryptophan biosynthesis; L-tryptophan from chorismate: step 1/5. Its activity is regulated as follows. Feedback inhibited by tryptophan. Functionally, part of a heterotetrameric complex that catalyzes the two-step biosynthesis of anthranilate, an intermediate in the biosynthesis of L-tryptophan. In the first step, the glutamine-binding beta subunit (TrpG) of anthranilate synthase (AS) provides the glutamine amidotransferase activity which generates ammonia as a substrate that, along with chorismate, is used in the second step, catalyzed by the large alpha subunit of AS (TrpE) to produce anthranilate. In the absence of TrpG, TrpE can synthesize anthranilate directly from chorismate and high concentrations of ammonia. The protein is Anthranilate synthase component 1 (trpE) of Buchnera aphidicola subsp. Baizongia pistaciae (strain Bp).